The following is a 1521-amino-acid chain: Suppressor of Ty 6 homolog (1521 aa).

The tract at residues 1-204 (MDFIDNQAEE…EGAEDDARDV (204 aa)) is disordered. Residues 26 to 41 (KKMKMAKDKLKKKKKV) are compositionally biased toward basic residues. A Nuclear localization signal motif is present at residues 26 to 42 (KKMKMAKDKLKKKKKVV). 2 stretches are compositionally biased toward acidic residues: residues 45 to 56 (SDEDEDDEDDEE) and 67 to 76 (ADEDDEEEDA). A compositionally biased stretch (basic and acidic residues) spans 77 to 89 (RSEKSDRSRRSEI). Residues 90–103 (NDELDDEDLDLIDE) show a composition bias toward acidic residues. The segment covering 127–149 (PIRRSNQDDDDLQSERGSDDGDK) has biased composition (basic and acidic residues). Over residues 167–177 (RSEDDFIEDDG) the composition is skewed to acidic residues. Residues 1182-1251 (LNAGRPGGCV…EKFSILLSCK (70 aa)) form the S1 motif domain. The 90-residue stretch at 1299 to 1388 (HPNFHNVSYE…IARFVLPMIQ (90 aa)) folds into the SH2 domain. Positions 1490–1521 (GIRSSLSYRPTGRTGPPPSAPYQQPPQQQYYR) are disordered. The segment covering 1504 to 1513 (GPPPSAPYQQ) has biased composition (pro residues).

Belongs to the SPT6 family. As to quaternary structure, interacts with glp-1 and lin-12.

It localises to the nucleus. In terms of biological role, histone H3-H4 chaperone that plays a role in maintenance of chromatin structure during RNA polymerase II transcription elongation. May be required for several aspects of morphogenesis of C.briggsae, including regulation of division in the germline and gut and specification of ventral-uterine precursor cell fate. This chain is Suppressor of Ty 6 homolog (emb-5), found in Caenorhabditis briggsae.